The primary structure comprises 466 residues: Glucose-6-phosphate 1-dehydrogenase 1 (466 aa).

NADP(+)-binding positions include Ser-48, 88–89, and Lys-141; that span reads DV. Residues His-171, Lys-175, Glu-209, and Asp-228 each coordinate substrate. His-233 functions as the Proton acceptor in the catalytic mechanism. Residues Lys-319 and Lys-324 each coordinate substrate.

Belongs to the glucose-6-phosphate dehydrogenase family.

It carries out the reaction D-glucose 6-phosphate + NADP(+) = 6-phospho-D-glucono-1,5-lactone + NADPH + H(+). It participates in carbohydrate degradation; pentose phosphate pathway; D-ribulose 5-phosphate from D-glucose 6-phosphate (oxidative stage): step 1/3. Functionally, catalyzes the oxidation of glucose 6-phosphate to 6-phosphogluconolactone. This Mycobacterium tuberculosis (strain CDC 1551 / Oshkosh) protein is Glucose-6-phosphate 1-dehydrogenase 1.